Here is a 137-residue protein sequence, read N- to C-terminus: MEKTLSIIKPDAVKKGVIGKILDRFESNGLRIAAMKKVQLSKEQAENFYAVHKERPFFKDLVEFMISGPVVVSVLEGEGAVLKNRDLMGATNPKEAKAGTIRADFAESIDANAVHGSDSLENAKIEIDFFFKPNEIC.

6 residues coordinate ATP: Lys9, Phe57, Arg85, Thr91, Arg102, and Asn112. His115 (pros-phosphohistidine intermediate) is an active-site residue.

The protein belongs to the NDK family. In terms of assembly, homotetramer. Mg(2+) serves as cofactor.

The protein resides in the cytoplasm. The enzyme catalyses a 2'-deoxyribonucleoside 5'-diphosphate + ATP = a 2'-deoxyribonucleoside 5'-triphosphate + ADP. It carries out the reaction a ribonucleoside 5'-diphosphate + ATP = a ribonucleoside 5'-triphosphate + ADP. Functionally, major role in the synthesis of nucleoside triphosphates other than ATP. The ATP gamma phosphate is transferred to the NDP beta phosphate via a ping-pong mechanism, using a phosphorylated active-site intermediate. This Campylobacter jejuni subsp. jejuni serotype O:6 (strain 81116 / NCTC 11828) protein is Nucleoside diphosphate kinase.